Reading from the N-terminus, the 564-residue chain is H/ACA ribonucleoprotein complex non-core subunit NAF1 (564 aa).

Disordered regions lie at residues 1–29 (MESE…ELGK), 108–218 (LVVQ…DSEG), 238–264 (DEDD…KVRG), 387–489 (ASWE…HPSY), and 538–564 (PHMY…PPPS). The span at 146-157 (ASGLSLLAAYSS) shows a compositional bias: low complexity. The segment covering 238–249 (DEDDEDFDEDGA) has biased composition (acidic residues). The residue at position 250 (threonine 250) is a Phosphothreonine. Serine 254 is modified (phosphoserine). Residues 388 to 402 (SWEHDVEPPARYVDH) show a composition bias toward basic and acidic residues. The residue at position 403 (serine 403) is a Phosphoserine. Residues 426-446 (STDSVDTVTSVATTATKASSV) show a composition bias toward low complexity. Threonine 427 carries the phosphothreonine modification. A Phosphoserine modification is found at serine 429. Phosphothreonine is present on threonine 432. Polar residues predominate over residues 468 to 489 (PSINQHNQNQPQDEQYNFHPSY). Positions 538–553 (PHMYPPPPPFAPPPPN) are enriched in pro residues. Polar residues predominate over residues 554 to 564 (NQSHQGQPPPS).

This sequence belongs to the NAF1 family. As to quaternary structure, during assembly of the complex, component of the box H/ACA small nucleolar ribonucleoprotein (H/ACA snoRNP) complex.

The protein localises to the nucleus. RNA-binding protein required for the maturation of the box H/ACA small nucleolar ribonucleoprotein (H/ACA snoRNP) complex and ribosome biogenesis. During assembly of the H/ACA snoRNP complex it associates with the complex and dissociates during complex maturation, becoming replaced by Gar1 to yield mature H/ACA snoRNP complex. The protein is H/ACA ribonucleoprotein complex non-core subunit NAF1 of Drosophila melanogaster (Fruit fly).